A 590-amino-acid chain; its full sequence is UvrABC system protein C (590 aa).

The GIY-YIG domain maps to 15–98 (AEPGVYQFVA…VKRHQPRYNV (84 aa)). Residues 207–242 (GALADPLRREMAAAAQAEAFERAANLRDRLAVVEGF) form the UVR domain.

The protein belongs to the UvrC family. Interacts with UvrB in an incision complex.

Its subcellular location is the cytoplasm. In terms of biological role, the UvrABC repair system catalyzes the recognition and processing of DNA lesions. UvrC both incises the 5' and 3' sides of the lesion. The N-terminal half is responsible for the 3' incision and the C-terminal half is responsible for the 5' incision. This Halobacterium salinarum (strain ATCC 29341 / DSM 671 / R1) protein is UvrABC system protein C.